A 139-amino-acid polypeptide reads, in one-letter code: Coat protein TP2 (139 aa).

The protein localises to the virion. The sequence is that of Coat protein TP2 from Thermoproteus tenax virus 1 (strain KRA1) (TTV1).